Here is a 437-residue protein sequence, read N- to C-terminus: MKNLKTKQFQGLNGSLLLPGDKSISHRSIMVASISRGISRIKNFSNSTDCLSTLNAFLDLGVEIKKYGRDLIVYGSGLDAFKDPKKPLNMGNSGTTTRLLLGLLAGQSFNTCLVGDASLSKRPMYRVTNPITEVGGEFSLTGNGTLPITVIGHPSLKAFDYHLPIASAQVKSALIFSALQADEPSIIFEKEATRNHLEIMLNDFGADIKTNGLCITVMPRPKLSGRTISIPGDISSAAFFMVAASLLPNSCICLKKVGLNPTRIGIISVLKRMNANIEVKKTSNEAEAYGDIIVHSSNLHAVEITSKEIPNVIDELPILTLAASLAKGRTIISGAGELRVKETYRISVVAAELKKLGARIQEKSDGMVIDGCPKLQIPENNLATHGDHRIGMMLAVAALLVDTSKTITLNNPEAIKISYPNFFRDLDYLLNNPDMKG.

Residues lysine 22, serine 23, and arginine 27 each coordinate 3-phosphoshikimate. Lysine 22 lines the phosphoenolpyruvate pocket. Phosphoenolpyruvate contacts are provided by glycine 94 and arginine 122. Serine 167, glutamine 169, aspartate 314, and lysine 341 together coordinate 3-phosphoshikimate. Glutamine 169 contributes to the phosphoenolpyruvate binding site. Aspartate 314 functions as the Proton acceptor in the catalytic mechanism. Arginine 345 and arginine 389 together coordinate phosphoenolpyruvate.

The protein belongs to the EPSP synthase family. As to quaternary structure, monomer.

Its subcellular location is the cytoplasm. The enzyme catalyses 3-phosphoshikimate + phosphoenolpyruvate = 5-O-(1-carboxyvinyl)-3-phosphoshikimate + phosphate. It functions in the pathway metabolic intermediate biosynthesis; chorismate biosynthesis; chorismate from D-erythrose 4-phosphate and phosphoenolpyruvate: step 6/7. In terms of biological role, catalyzes the transfer of the enolpyruvyl moiety of phosphoenolpyruvate (PEP) to the 5-hydroxyl of shikimate-3-phosphate (S3P) to produce enolpyruvyl shikimate-3-phosphate and inorganic phosphate. In Oenococcus oeni (strain ATCC BAA-331 / PSU-1), this protein is 3-phosphoshikimate 1-carboxyvinyltransferase.